Here is a 408-residue protein sequence, read N- to C-terminus: Retron Ec48 reverse transcriptase (408 aa).

One can recognise a Reverse transcriptase domain in the interval 43–269 (EELKAIAELP…EPIKVHGLRV (227 aa)). The Mg(2+) site is built by Asp137, Asp216, and Asp217.

This sequence belongs to the bacterial reverse transcriptase family.

It catalyses the reaction DNA(n) + a 2'-deoxyribonucleoside 5'-triphosphate = DNA(n+1) + diphosphate. Its function is as follows. Reverse transcriptase (RT) component of antiviral defense system retron Ec48, composed of a non-coding RNA (ncRNA), this reverse transcriptase (RT) and the following membrane protein. Expression of this retron confers protection against bacteriophages lambda, T2, T4, T5 and T7. At multiplicity of infection (MOI) of 0.02 cultures grow normally when infected with lambda without collapsing, at MOI 2 cultures enter growth stasis. At MOI 3 cell membranes are permeabilized within 15 minutes of infection but do not lyse, suggesting the phage are not able to finish a replication cycle. Antiviral defense is suppressed by mutations that knockout the lambda gam expression or phage T7 gp5.9 expression; both viral genes inhibit host RecBCD. The Ec48 retron may sense the integrity of the RecBCD enzyme; when RecBCD is perturbed by viral proteins the Ec48 effector (the membrane protein) is activated, leading to abortive infection and bacterial growth arrest. Responsible for synthesis of msDNA-Ec48 (a branched molecule with RNA linked by a 2',5'-phosphodiester bond to ssDNA). The retron transcript serves as primer (from a conserved internal G residue) and template for the reaction, and codes for the RT. This chain is Retron Ec48 reverse transcriptase, found in Escherichia coli.